Consider the following 742-residue polypeptide: Clamp-binding protein CrfC (742 aa).

The clamp-binding consensus stretch occupies residues 41 to 45 (QLALP). Residues 66 to 402 (SRLEMVLAIV…LWEDSLFAQP (337 aa)) form the Dynamin-type G domain. The tract at residues 76 to 83 (GTMKAGKS) is G1 motif. The tract at residues 102–104 (MTA) is G2 motif. Positions 236 to 239 (DTPG) are G3 motif. The interval 297 to 300 (NKFD) is G4 motif. The segment at 331-334 (FPVS) is G5 motif. Positions 440 to 472 (RAHGLNVACEQLRQNIHQVEESLQLLQLNQAQV) form a coiled coil.

This sequence belongs to the TRAFAC class dynamin-like GTPase superfamily. Dynamin/Fzo/YdjA family. As to quaternary structure, forms homooligomers. Binds to the beta sliding clamp processivity factor (DnaN) in the presence and absence of DNA, may bind to the clamp itself as homodimers or trimers. Homooligomers may be able to bind more than 1 clamp complex.

Its subcellular location is the cytoplasm. In terms of biological role, important for the colocalization of sister nascent DNA strands after replication fork passage during DNA replication, and for positioning and subsequent partitioning of sister chromosomes. Does not have GTPase activity on its own. The chain is Clamp-binding protein CrfC (crfC) from Escherichia coli.